A 424-amino-acid chain; its full sequence is MGVSIVLGSQWGDEGKGKITDMLAQQATLCCRAAGGHNAGHTIVHGNKTYDFHILPSGLISPSCINLIGAGTVVHVPSFFKELASLEEKGLEGASKRIFISDRAHVCLQLHSVVDGLEEAKLGGRKVGTTGKGIGPCYSDKASRRGIRVGEILDEAVFERKLRSLDAGYRARFGDLEYNVEEELAQFKEYRKLLGPYIVDQLAFLQKYKDSPNTLVEGANALMLDLDHGTYPYVTSSSTGLGGAMQALSLNPTSIKSVIGVVKAYTTRVGSGPFPSEQFNADGDKLQSVGREFGVTTGRRRRCGWLDLVVCRYSQAINHYTALNLTKLDVLDDFDEIKVGVAYILPDGTRTENTIPADAEVLEKVKVEYVTLPGWKSNTMGVKKYEDLPDNARAYIEYIERELGGVPVKWIGTGPARDDMIARE.

GTP contacts are provided by residues 12-18 (GDEGKGK) and 40-42 (GHT). Residue aspartate 13 is the Proton acceptor of the active site. Residues aspartate 13 and glycine 40 each coordinate Mg(2+). Residues 13-16 (DEGK), 38-41 (NAGH), threonine 130, arginine 144, asparagine 220, threonine 235, and arginine 299 contribute to the IMP site. Histidine 41 (proton donor) is an active-site residue. Residue 295–301 (VTTGRRR) participates in substrate binding. Residues arginine 301, 327 to 329 (KLD), and 412 to 414 (GTG) each bind GTP.

Belongs to the adenylosuccinate synthetase family. In terms of assembly, homodimer. It depends on Mg(2+) as a cofactor.

The protein localises to the cytoplasm. The enzyme catalyses IMP + L-aspartate + GTP = N(6)-(1,2-dicarboxyethyl)-AMP + GDP + phosphate + 2 H(+). It participates in purine metabolism; AMP biosynthesis via de novo pathway; AMP from IMP: step 1/2. Plays an important role in the de novo pathway and in the salvage pathway of purine nucleotide biosynthesis. Catalyzes the first committed step in the biosynthesis of AMP from IMP. This chain is Adenylosuccinate synthetase, found in Aspergillus flavus (strain ATCC 200026 / FGSC A1120 / IAM 13836 / NRRL 3357 / JCM 12722 / SRRC 167).